The sequence spans 968 residues: MPFTLGQRWISDTESELGLGTVVAVDARTVTLLFPSTGENRLYARSDSPVTRVMFNPGDTITSHDGWQMQVEEVKEENGLLTYIGTRLDTEESGVALREVFLDSKLVFSKPQDRLFAGQIDRMDRFALRYRARKYSSEQFRMPYSGLRGQRTSLIPHQLNIAHDVGRRHAPRVLLADEVGLGKTIEAGMILHQQLLSGAAERVLIIVPETLQHQWLVEMLRRFNLRFALFDDERYAEAQHDAYNPFDTEQLVICSLDFARRSKQRLEHLCEAEWDLLVVDEAHHLVWSEDAPSREYQAIEQLAEHVPGVLLLTATPEQLGMESHFARLRLLDPNRFHDFAQFVEEQKNYRPVADAVAMLLAGNKLSNDELNMLGEMIGEQDIEPLLQAANSDSEDAQSARQELVSMLMDRHGTSRVLFRNTRNGVKGFPKRELHTIKLPLPTQYQTAIKVSGIMGARKSAEDRARDMLYPERIYQEFEGDNATWWNFDPRVEWLMGYLTSHRSQKVLVICAKAATALQLEQVLREREGIRAAVFHEGMSIIERDRAAAWFAEEDTGAQVLLCSEIGSEGRNFQFASHMVMFDLPFNPDLLEQRIGRLDRIGQAHDIQIHVPYLEKTAQSVLVRWYHEGLDAFEHTCPTGRTIYDSVYNGLINYLASPDQTEGFDDLIKNCREQHEALKAQLEQGRDRLLEIHSNGGEKAQALAESIEEQDDDTNLIAFAMNLFDIIGINQDDRGDNMIVLTPSDHMLVPDFPGLSEDGITITFDREVALAREDAQFITWEHPLIRNGLDLILSGDTGSSTISLLKNKALPVGTLLVELIYVVEAQAPKQLQLNRFLPPTPVRMLLDKNGNNLAAQVEFETFNRQLNAVNRHTGSKLVNAVQQDVHAILQLGEAQIEKSARALIDAARNEADEKLSAELSRLEALRAVNPNIRDDELTAIESNRQQVMESLDQAGWRLDALRLIVVTHQ.

The Helicase ATP-binding domain maps to 164-334; sequence DVGRRHAPRV…FARLRLLDPN (171 aa). ATP is bound at residue 177 to 184; it reads DEVGLGKT. A DEAH box motif is present at residues 280–283; the sequence is DEAH. Residues 490–662 enclose the Helicase C-terminal domain; the sequence is RVEWLMGYLT…YLASPDQTEG (173 aa).

It belongs to the SNF2/RAD54 helicase family. RapA subfamily. As to quaternary structure, interacts with the RNAP. Has a higher affinity for the core RNAP than for the holoenzyme. Its ATPase activity is stimulated by binding to RNAP.

Functionally, transcription regulator that activates transcription by stimulating RNA polymerase (RNAP) recycling in case of stress conditions such as supercoiled DNA or high salt concentrations. Probably acts by releasing the RNAP, when it is trapped or immobilized on tightly supercoiled DNA. Does not activate transcription on linear DNA. Probably not involved in DNA repair. In Escherichia coli O9:H4 (strain HS), this protein is RNA polymerase-associated protein RapA.